The primary structure comprises 702 residues: MLPTASSKRRTFAARYFTRSKSLVMGEQSRSPGRPLVPHKLGPVLKAGWLRKQRSIMKNWQQRWFVLRGDQLFYYKDKDESKPQGFISLQGTQVTELLPDPEDPGKHLFEITPGGATEREKVPANPEALLLMASSQRDMEDWVQAIRRVIWAPLGRGIFGQRLEDTVHHERKFGPRLAPLLVEQCVDFIRERGLSEEGLFRMPGQANLVRDLQDSFDCGEKPLFDSTTDVHTVASLLKLYLRELPEPVIPFARYEDFLSCAQLLTKDEGEGTVELAKQVSNLPQANYNLLRYICKFLDEVQAHSDVNKMSVQNLATVFGPNILRPQIEDPVTIMEGTSLVQHLMTVLIRKHGQLFAATSLEEPASPHGTVEWGSEEVTRDHRGEPGSPGLPTHRTSSLDGPAAAVLSRTSPPRLGSQTGPAATSPGKKMHTLPVWKSSFRQQGSRSESPKGVNSSLEVPIISSGGNWLINGLSSLRSHRRASSGDRLKDTGSAQRLSTYDNVPPSSQFSSTASVASTSWSVASSSREASVSSCTACRASNSSACSSLHTEWALEPSPLPSSSEGHQSPDLGHSLDEPCVGSGSSEPNDPGSPTQAHVRRCRALQGQVAELRAELCQQRTEYKRSLKSIEEGSADLRKQMSRLEEELDQERKKYAMLEIKLRNSERAREDAERRNQLLQREMEEFFSTLGSLTTGTKGSRAPE.

One can recognise a PH domain in the interval 43-151 (PVLKAGWLRK…WVQAIRRVIW (109 aa)). The region spanning 161–355 (QRLEDTVHHE…VLIRKHGQLF (195 aa)) is the Rho-GAP domain. Disordered stretches follow at residues 360-433 (LEEP…HTLP), 438-457 (SFRQQGSRSESPKGVNSSLE), 480-511 (RASSGDRLKDTGSAQRLSTYDNVPPSSQFSST), and 555-596 (PSPL…TQAH). A phosphoserine mark is found at S365 and S397. 4 stretches are compositionally biased toward polar residues: residues 407 to 421 (SRTSPPRLGSQTGPA), 438 to 456 (SFRQQGSRSESPKGVNSSL), 491 to 504 (GSAQRLSTYDNVPP), and 581 to 594 (SGSSEPNDPGSPTQ). Residues 594–691 (QAHVRRCRAL…EEFFSTLGSL (98 aa)) are a coiled coil.

As to quaternary structure, interacts with VEZF1. Predominantly present in endothelial cells (at protein level).

It localises to the cytoplasm. Its subcellular location is the nucleus. Its function is as follows. Rho GTPase-activating protein involved in the signal transduction pathway that regulates endothelial cell capillary tube formation during angiogenesis. Acts as a GTPase activator for the RAC1 by converting it to an inactive GDP-bound state. Inhibits RAC1-dependent lamellipodia formation. May also play a role in transcription regulation via its interaction with VEZF1, by regulating activity of the endothelin-1 (EDN1) promoter. In Mus musculus (Mouse), this protein is Rho GTPase-activating protein 22 (Arhgap22).